The primary structure comprises 725 residues: Protein ALEX (725 aa).

7 disordered regions span residues 1-93 (MSPS…ARAQ), 177-226 (GAIA…PLTD), 256-340 (EPPL…PSQP), 396-481 (PILT…SPLL), 508-528 (PMQV…PLGH), 584-624 (LPGL…AASS), and 638-675 (ATRS…GRPR). The span at 41-51 (HLRRKPCHSRH) shows a compositional bias: basic residues. Positions 260 to 276 (GSTTTPLSIWTAPQSQV) are enriched in polar residues. Basic and acidic residues-rich tracts occupy residues 297–307 (QLSEKQPRWKE) and 314–326 (RWKE…REGT). 2 stretches are compositionally biased toward pro residues: residues 423-442 (PSQP…PGQP) and 459-473 (RSLP…PRSP). 2 stretches are compositionally biased toward low complexity: residues 584–598 (LPGL…AAAG) and 643–658 (ATQS…EAAS).

Belongs to the ALEX family. Interacts with the N-terminal region of the XLas isoforms of guanine nucleotide-binding protein G(s) subunit alpha.

The protein localises to the cell membrane. The protein resides in the cell projection. It localises to the ruffle. May inhibit the adenylyl cyclase-stimulating activity of guanine nucleotide-binding protein G(s) subunit alpha which is produced from the same locus in a different open reading frame. This chain is Protein ALEX, found in Mus musculus (Mouse).